A 155-amino-acid chain; its full sequence is Small ribosomal subunit protein uS7cz/uS7cy (155 aa).

This sequence belongs to the universal ribosomal protein uS7 family. In terms of assembly, part of the 30S ribosomal subunit.

It localises to the plastid. It is found in the chloroplast. In terms of biological role, one of the primary rRNA binding proteins, it binds directly to 16S rRNA where it nucleates assembly of the head domain of the 30S subunit. The chain is Small ribosomal subunit protein uS7cz/uS7cy (rps7-A) from Eucalyptus globulus subsp. globulus (Tasmanian blue gum).